The primary structure comprises 165 residues: MITKLIPRKVFFTSGVGLHSEKLESFEVSLRDAGIEKFNLVTVSSILPPNCEIVTKEEGLKELSPGEVVFCVMSRISSNEPGKTLSTSVGCALPRDISKHGYISEYHAYEENAQDVGEHAKKLAGSMYSTWTNEAPLKTFSIPRSSSVQESGDWMTVISAAVFII.

Position 45 is a pyruvic acid (Ser) (Ser-45).

Belongs to the PdaD family. It depends on pyruvate as a cofactor.

It catalyses the reaction L-arginine + H(+) = agmatine + CO2. The sequence is that of Pyruvoyl-dependent arginine decarboxylase 1 (pdaD1) from Methanosarcina acetivorans (strain ATCC 35395 / DSM 2834 / JCM 12185 / C2A).